The following is a 267-amino-acid chain: LysM and putative peptidoglycan-binding domain-containing protein 4 (267 aa).

The Extracellular segment spans residues 1–211 (MRRGDPPPRA…RSNGADWGIQ (211 aa)). The disordered stretch occupies residues 30-64 (HRQEEPEASSEDEELNVMELRPRSRDSSSKEKEGV). The span at 35-45 (PEASSEDEELN) shows a compositional bias: acidic residues. Residues 49-64 (LRPRSRDSSSKEKEGV) show a composition bias toward basic and acidic residues. Residues 70-114 (LERDISHEDNLSKLALQYGCKVADIKRVNNLFQEQDMYALKSIKI) enclose the LysM domain. N79 carries an N-linked (GlcNAc...) asparagine glycan. Residues 130–152 (RTPQQRPSHDAAPSNSAMASVSG) form a disordered region. A compositionally biased stretch (polar residues) spans 142–152 (PSNSAMASVSG). A helical membrane pass occupies residues 212–232 (WWNAVIAMLLIGIVLPIFYVV). Over 233 to 267 (YYKTKDSGESAVDNVGVNISVSTSNSTREYNGKSP) the chain is Cytoplasmic.

Its subcellular location is the membrane. In Danio rerio (Zebrafish), this protein is LysM and putative peptidoglycan-binding domain-containing protein 4 (lysmd4).